The chain runs to 530 residues: Equilibrative nucleoside transporter 4 (530 aa).

The segment at 1–21 is disordered; sequence MGSVGSQRLEEPSVAGTPDPG. Residues 1-68 are Extracellular-facing; that stretch reads MGSVGSQRLE…DEPVPDDRYH (68 aa). Residues 69–89 traverse the membrane as a helical segment; the sequence is AIYFAMLLAGVGFLLPYNSFI. Topologically, residues 90-101 are cytoplasmic; that stretch reads TDVDYLHHKYPG. A helical transmembrane segment spans residues 102 to 122; it reads TSIVFDMSLTYILVALAAVLL. At 123–139 the chain is on the extracellular side; the sequence is NNVLVERLTLHTRITAG. The chain crosses the membrane as a helical span at residues 140 to 160; it reads YLLALGPLLFISICDVWLQLF. The Cytoplasmic portion of the chain corresponds to 161-166; it reads SRDQAY. Residues 167–187 form a helical membrane-spanning segment; that stretch reads AINLAAVGTVAFGCTVQQSSF. Residues 188-231 lie on the Extracellular side of the membrane; sequence YGYTGMLPKRYTQGVMTGESTAGVMISLSRILTKLLLPDERAST. A helical transmembrane segment spans residues 232–252; it reads LIFFLVSVALELLCFLLHLLV. The Cytoplasmic segment spans residues 253-351; it reads RRSRFVLFYT…LLLHRYVVAR (99 aa). Residues 352-372 traverse the membrane as a helical segment; it reads VIWADMLSIAVTYFITLCLFP. The Extracellular segment spans residues 373-381; sequence GLESEIRHC. Residues 382-402 form a helical membrane-spanning segment; sequence ILGEWLPILIMAVFNLSDFVG. The Cytoplasmic portion of the chain corresponds to 403-416; it reads KILAALPVDWRGTH. Residues 417–437 traverse the membrane as a helical segment; sequence LLACSCLRVVFIPLFILCVYP. The Extracellular portion of the chain corresponds to 438 to 450; that stretch reads SGMPALRHPAWPC. A helical transmembrane segment spans residues 451–471; it reads IFSLLMGISNGYFGSVPMILA. Residues 472–486 lie on the Cytoplasmic side of the membrane; sequence AGKVSPKQRELAGNT. Residues 487 to 509 traverse the membrane as a helical segment; it reads MTVSYMSGLTLGSAVAYCTYSLT. The Extracellular segment spans residues 510 to 530; that stretch reads RDAHGSCLHASTANGSILAGL. The N-linked (GlcNAc...) asparagine glycan is linked to asparagine 523.

Belongs to the SLC29A/ENT transporter (TC 2.A.57) family. Post-translationally, N-glycosylated. As to expression, mainly expressed in brain and skeletal muscle. In brain, expressed in cerebellum, cerebral cortex, medulla oblongata, occipital pole, frontal and temporal lobes putamen, spinal cord, substancia nigra, hippocampus, caudate nucleus, nucleus accumbens, pons and choroid plexus. Expressed in heart, in both cardiomyocytes and vascular endothelial cells. Also expressed in adrenal gland, small intestine, pancreas, kidney, liver, bone marrow, lymph node. Located in endometrial stroma, where the expression is high in the proliferative phase, decreases during the secretory phase, and is no longer detectable in the menstrual phase.

The protein resides in the cell membrane. The protein localises to the apical cell membrane. It catalyses the reaction serotonin(out) = serotonin(in). It carries out the reaction dopamine(out) = dopamine(in). The catalysed reaction is (R)-noradrenaline(out) = (R)-noradrenaline(in). The enzyme catalyses (R)-adrenaline(out) = (R)-adrenaline(in). It catalyses the reaction histamine(out) = histamine(in). It carries out the reaction tyramine(in) = tyramine(out). The catalysed reaction is guanidine(out) = guanidine(in). The enzyme catalyses adenosine(in) = adenosine(out). With respect to regulation, activated at acidic pH. Its function is as follows. Electrogenic voltage-dependent transporter that mediates the transport of a variety of endogenous bioactive amines, cationic xenobiotics and drugs. Utilizes the physiologic inside-negative membrane potential as a driving force to facilitate cellular uptake of organic cations. Functions as a Na(+)- and Cl(-)-independent bidirectional transporter. Substrate transport is pH-dependent and enhanced under acidic condition, which is most likely the result of allosteric changes in the transporter structure. Implicated in monoamine neurotransmitters uptake such as serotonin, dopamine, adrenaline/epinephrine, noradrenaline/norepinephrine, histamine and tyramine, thereby supporting a role in homeostatic regulation of aminergic neurotransmission in the central nervous system. Also responsible for the uptake of bioactive amines and drugs through the blood-cerebrospinal fluid (CSF) barrier, from the CSF into choroid plexus epithelial cells, thereby playing a significant role in the clearance of cationic neurotoxins, xenobiotics and metabolic waste in the brain. Involved in bidirectional transport of the purine nucleoside adenosine and plays a role in the regulation of extracellular adenosine concentrations in cardiac tissues, in particular during ischemia. May be involved in organic cation uptake from the tubular lumen into renal tubular cells, thereby contributing to organic cation reabsorption in the kidney. Also transports guanidine. This Homo sapiens (Human) protein is Equilibrative nucleoside transporter 4.